Here is a 140-residue protein sequence, read N- to C-terminus: Alkaline proteinase inhibitor (140 aa).

The N-terminal stretch at Met1–Ala25 is a signal peptide.

This sequence belongs to the protease inhibitor I38 family.

The protein localises to the periplasm. Inhibitor of the alkaline protease. The protein is Alkaline proteinase inhibitor (inh) of Pseudomonas brassicacearum (strain NFM421).